A 321-amino-acid polypeptide reads, in one-letter code: Large ribosomal subunit protein uL10 (321 aa).

The tract at residues 284-321 (SAGTAPTGGGAAAAAVEEKKEEPEEESDDDIGFSLFDD) is disordered. Positions 306 to 321 (PEEESDDDIGFSLFDD) are enriched in acidic residues.

This sequence belongs to the universal ribosomal protein uL10 family. As to quaternary structure, P0 forms a pentameric complex by interaction with dimers of P1 and P2. Phosphorylated.

In terms of biological role, ribosomal protein P0 is the functional equivalent of E.coli protein L10. In Oxybasis rubra (Red goosefoot), this protein is Large ribosomal subunit protein uL10.